We begin with the raw amino-acid sequence, 97 residues long: Integration host factor subunit alpha (97 aa).

Positions 50 to 71 are disordered; sequence FGNFTLRDKPQRPGRNPKTGEE.

This sequence belongs to the bacterial histone-like protein family. In terms of assembly, heterodimer of an alpha and a beta chain.

In terms of biological role, this protein is one of the two subunits of integration host factor, a specific DNA-binding protein that functions in genetic recombination as well as in transcriptional and translational control. This Legionella pneumophila (strain Paris) protein is Integration host factor subunit alpha.